We begin with the raw amino-acid sequence, 323 residues long: MSGIWVHLSLIFISVSGPLSKGENAHMAGINSEGLKLNITEANSCQEGLYREHQFCCQPCPPGKRKNGDCKRDGDTPECVLCSEGNEYTDKSHHSDKCIRCSICDEEHGLEVEQNCTRTRNTKCRCKSNFFCNSSPCEHCNPCTTCEHGIIEKCTPTSNTKCKGSRSHANSLWALLILLIPIVLIIYKVVKSRERNKKNDYCNSAASNDEGRQLNLTDVDLGKYIPSIAEQMRITEVKEFVRKNGMEEAKIDDIMHDNVHETAEQKVQLLRNWYQSHGKKNAYCTLTKSLPKALAEKICDIVMKDITNERENANLQNENENLV.

Residues 1 to 22 (MSGIWVHLSLIFISVSGPLSKG) form the signal peptide. Residues 23–170 (ENAHMAGINS…KCKGSRSHAN (148 aa)) lie on the Extracellular side of the membrane. N38 carries an N-linked (GlcNAc...) asparagine glycan. Cystine bridges form between C45–C56, C57–C70, C60–C79, C82–C98, C101–C116, C104–C124, C126–C140, C143–C154, and C146–C162. 3 TNFR-Cys repeats span residues 45–80 (CQEG…PECV), 81–124 (LCSE…NTKC), and 125–163 (RCKS…TKCK). An N-linked (GlcNAc...) asparagine glycan is attached at N115. Residues 171-188 (SLWALLILLIPIVLIIYK) traverse the membrane as a helical segment. Residues 189–323 (VVKSRERNKK…NLQNENENLV (135 aa)) lie on the Cytoplasmic side of the membrane. Residues 204 to 305 (SAASNDEGRQ…EKICDIVMKD (102 aa)) are interaction with HIPK3. The segment at 222 to 246 (GKYIPSIAEQMRITEVKEFVRKNGM) is interaction with CALM. The 69-residue stretch at 238–306 (KEFVRKNGME…KICDIVMKDI (69 aa)) folds into the Death domain.

Binds DAXX. Interacts with HIPK3. Part of a complex containing HIPK3 and FADD. Binds RIPK1 and FAIM2. Interacts with BABAM2 and FEM1B. Interacts with FADD. Interacts directly (via DED domain) with NOL3 (via CARD domain); inhibits death-inducing signaling complex (DISC) assembly by inhibiting the increase in FAS-FADD binding induced by FAS activation. Interacts with CALM. In the absence of stimulation, interacts with BIRC2, DDX3X and GSK3B. The interaction with BIRC2 and DDX3X is further enhanced upon receptor stimulation and accompanied by DDX3X and BIRC2 cleavage. In terms of processing, palmitoylated. Palmitoylation by ZDHHC7 prevents the lysosomal degradation of FAS regulating its expression at the plasma membrane. As to expression, detected in peripheral blood lymphocytes, thymus, spleen, lung and ovary.

The protein localises to the cell membrane. It localises to the membrane raft. Receptor for TNFSF6/FASLG. The adapter molecule FADD recruits caspase-8 to the activated receptor. The resulting death-inducing signaling complex (DISC) performs caspase-8 proteolytic activation which initiates the subsequent cascade of caspases (aspartate-specific cysteine proteases) mediating apoptosis. FAS-mediated apoptosis may have a role in the induction of peripheral tolerance, in the antigen-stimulated suicide of mature T-cells, or both. This Bos taurus (Bovine) protein is Tumor necrosis factor receptor superfamily member 6 (FAS).